Here is a 69-residue protein sequence, read N- to C-terminus: MADLKPSLTGLTEEEAKEFHGIFVTSTVLYLATAVIVHYLVWTARPWIAPIPKGWVNLEGVQSALSYLV.

At 2-21 (ADLKPSLTGLTEEEAKEFHG) the chain is on the cytoplasmic side. A bacteriochlorophyll contacts are provided by histidine 20 and histidine 38. Residues 22 to 44 (IFVTSTVLYLATAVIVHYLVWTA) traverse the membrane as a helical segment. Over 45–56 (RPWIAPIPKGWV) the chain is Periplasmic. Positions 57 to 69 (NLEGVQSALSYLV) are excised as a propeptide.

This sequence belongs to the antenna complex beta subunit family. As to quaternary structure, the core complex is formed by different alpha and beta chains, binding bacteriochlorophyll molecules, and arranged most probably in tetrameric structures disposed around the reaction center. The non-pigmented gamma chains may constitute additional components.

It localises to the cell inner membrane. In terms of biological role, antenna complexes are light-harvesting systems, which transfer the excitation energy to the reaction centers. The chain is Light-harvesting protein B-1015 beta chain (pufB) from Blastochloris viridis (Rhodopseudomonas viridis).